Here is a 263-residue protein sequence, read N- to C-terminus: Trans-aconitate 2-methyltransferase (263 aa).

This sequence belongs to the methyltransferase superfamily. Tam family.

The protein localises to the cytoplasm. It catalyses the reaction trans-aconitate + S-adenosyl-L-methionine = (E)-3-(methoxycarbonyl)pent-2-enedioate + S-adenosyl-L-homocysteine. Functionally, catalyzes the S-adenosylmethionine monomethyl esterification of trans-aconitate. The polypeptide is Trans-aconitate 2-methyltransferase (Mycobacterium marinum (strain ATCC BAA-535 / M)).